Reading from the N-terminus, the 413-residue chain is uncharacterized protein (413 aa).

Residues 1-20 (MRVIIVIMMVVFVVVGTSSG) form the signal peptide.

This is an uncharacterized protein from Archaeoglobus fulgidus (strain ATCC 49558 / DSM 4304 / JCM 9628 / NBRC 100126 / VC-16).